We begin with the raw amino-acid sequence, 226 residues long: X-linked lymphocyte-regulated protein 3C (226 aa).

The segment at 1–66 is disordered; sequence MSSRKRKATD…QARKEKQDLV (66 aa). Over residues 8 to 18 the composition is skewed to basic and acidic residues; it reads ATDTAGRHSRM. Residues 21 to 30 are compositionally biased toward polar residues; the sequence is NLSSDDSQNP. Composition is skewed to basic and acidic residues over residues 39-48 and 56-66; these read EVLDAGREDI and QQARKEKQDLV. The stretch at 155–210 forms a coiled coil; the sequence is ESLTLQKNRMEEFKSLCEKYLEKLEVLRDSRGNSIAEELRRLIATLEIKLLMLHNQ.

The protein belongs to the XLR/SYCP3 family. In terms of tissue distribution, expressed in lymphoid cells.

In Mus musculus (Mouse), this protein is X-linked lymphocyte-regulated protein 3C (Xlr3c).